The chain runs to 46 residues: Acetylajmalan esterase (46 aa).

N-linked (GlcNAc...) asparagine glycosylation is present at asparagine 39.

The protein belongs to the 'GDSL' lipolytic enzyme family.

The enzyme catalyses 17-O-acetylajmaline + H2O = ajmaline + acetate + H(+). It carries out the reaction 17-O-acetylnorajmaline + H2O = norajmaline + acetate + H(+). Its function is as follows. Deacetylates 17-O-acetylajmaline and 17-O-acetylnorajmaline, but is inactive toward other acetylated alkaloids. This chain is Acetylajmalan esterase, found in Rauvolfia verticillata (Common devil-pepper).